Consider the following 658-residue polypeptide: Heat shock 70 kDa protein, mitochondrial (658 aa).

Residues 629–658 (KLDSSASKSSSTENKENKDNTTEAEFTEKK) form a disordered region. Residues 631-640 (DSSASKSSST) are compositionally biased toward low complexity. Residues 641–658 (ENKENKDNTTEAEFTEKK) show a composition bias toward basic and acidic residues.

It belongs to the heat shock protein 70 family.

It localises to the mitochondrion. Its function is as follows. May function in protein folding and assembly, and disassembly of protein complexes. This is Heat shock 70 kDa protein, mitochondrial (mhsp70) from Dictyostelium discoideum (Social amoeba).